We begin with the raw amino-acid sequence, 430 residues long: MTSVVVVGTQWGDEGKGKITDFLSADAEVIARYQGGDNAGHTIVIDGKKFKLHLIPSGIFFPEKISVIGNGVVVNPKSLVKELAYLHEEGITTDNLRISDRAHVILPYHIKLDQLQEDAKGDNKIGTTIKGIGPAYMDKAARVGIRIADLLDKEIFAERLRINLAEKNRLFEKMYDSEALDFDSIFEEYYAYGQEIKKYVTDTSVILNDALDAGKRVLFEGAQGVMLDIDQGTYPFVTSSNPVAGGVTIGSGVGPSKINKVVGVCKAYTSRVGDGPFPTELFDEVGDRIREVGHEYGTTTGRPRRVGWFDSVVMRHSRRVSGITNLSLNSIDVLSGLDTVKICVAYDLDGERIDYYPASLEQLKRCKPIYEELPGWSEDITGVRSLDDLPENARNYVRRVSELVGVRISTFSVGPGREQTNILESVWANI.

GTP is bound by residues 12-18 and 40-42; these read GDEGKGK and GHT. Aspartate 13 (proton acceptor) is an active-site residue. Positions 13 and 40 each coordinate Mg(2+). IMP is bound by residues 13-16, 38-41, threonine 128, arginine 142, glutamine 223, threonine 238, and arginine 302; these read DEGK and NAGH. The active-site Proton donor is histidine 41. 298-304 contributes to the substrate binding site; it reads TTTGRPR. GTP is bound by residues arginine 304, 330–332, and 412–414; these read SID and SVG.

It belongs to the adenylosuccinate synthetase family. As to quaternary structure, homodimer. It depends on Mg(2+) as a cofactor.

The protein localises to the cytoplasm. The enzyme catalyses IMP + L-aspartate + GTP = N(6)-(1,2-dicarboxyethyl)-AMP + GDP + phosphate + 2 H(+). Its pathway is purine metabolism; AMP biosynthesis via de novo pathway; AMP from IMP: step 1/2. Functionally, plays an important role in the de novo pathway of purine nucleotide biosynthesis. Catalyzes the first committed step in the biosynthesis of AMP from IMP. This chain is Adenylosuccinate synthetase, found in Streptococcus uberis (strain ATCC BAA-854 / 0140J).